The primary structure comprises 157 residues: MAKKPDTSSRIADNKKAAYNYFFEERYEAGLVLHGWEVKALREGKVQLTDGYVIIKDGELFLIGCQINPLKTASTHVSPDAARIKKLLMHKDEIRRLIGKVEQKGYTLVPLNLHWKDGRAKCEIALAKGKAEHDKRDTIKEREGKREVERVMKSRHR.

Positions 130-157 (KAEHDKRDTIKEREGKREVERVMKSRHR) are disordered.

This sequence belongs to the SmpB family.

The protein resides in the cytoplasm. Required for rescue of stalled ribosomes mediated by trans-translation. Binds to transfer-messenger RNA (tmRNA), required for stable association of tmRNA with ribosomes. tmRNA and SmpB together mimic tRNA shape, replacing the anticodon stem-loop with SmpB. tmRNA is encoded by the ssrA gene; the 2 termini fold to resemble tRNA(Ala) and it encodes a 'tag peptide', a short internal open reading frame. During trans-translation Ala-aminoacylated tmRNA acts like a tRNA, entering the A-site of stalled ribosomes, displacing the stalled mRNA. The ribosome then switches to translate the ORF on the tmRNA; the nascent peptide is terminated with the 'tag peptide' encoded by the tmRNA and targeted for degradation. The ribosome is freed to recommence translation, which seems to be the essential function of trans-translation. In Acidovorax sp. (strain JS42), this protein is SsrA-binding protein.